The following is a 100-amino-acid chain: NADH-quinone oxidoreductase subunit K (100 aa).

Transmembrane regions (helical) follow at residues 4-24 (LTHG…GLVI), 28-48 (LLFM…AFVV), and 60-80 (IMYI…LALL).

Belongs to the complex I subunit 4L family. NDH-1 is composed of 13 different subunits. Subunits NuoA, H, J, K, L, M, N constitute the membrane sector of the complex.

The protein localises to the cell inner membrane. It catalyses the reaction a quinone + NADH + 5 H(+)(in) = a quinol + NAD(+) + 4 H(+)(out). Its function is as follows. NDH-1 shuttles electrons from NADH, via FMN and iron-sulfur (Fe-S) centers, to quinones in the respiratory chain. The immediate electron acceptor for the enzyme in this species is believed to be ubiquinone. Couples the redox reaction to proton translocation (for every two electrons transferred, four hydrogen ions are translocated across the cytoplasmic membrane), and thus conserves the redox energy in a proton gradient. The chain is NADH-quinone oxidoreductase subunit K from Klebsiella pneumoniae (strain 342).